We begin with the raw amino-acid sequence, 1640 residues long: RING finger protein 17 (1640 aa).

Residues 30-73 (CTRCGRKVSVASGDHHKFPCGHAFCELCLLAPQEYTTSKCTDCE) form an RING-type zinc finger. Phosphoserine is present on Ser-134. The residue at position 229 (Lys-229) is an N6-acetyllysine. Disordered stretches follow at residues 348–376 (TDETPEPPLQAEAPDRHLEGKKKQPTKEM) and 413–435 (DDPIETSGYPKKPPQKEQSAPVG). The segment covering 360-373 (APDRHLEGKKKQPT) has biased composition (basic and acidic residues). 2 Tudor domains span residues 751–809 (CPLQ…FLEP) and 985–1044 (KWEC…LKTM). The segment covering 1170-1184 (NEHKVPDSKGKKSES) has biased composition (basic and acidic residues). A disordered region spans residues 1170 to 1191 (NEHKVPDSKGKKSESRSTGCYR). Tudor domains are found at residues 1246 to 1303 (SWKK…PDTP) and 1496 to 1556 (DFSS…LMQY).

In terms of assembly, interacts with MXD1, MXD3, MXD4, MXI1 and PIWIL1. Self-associates. Expressed at high levels in adult testis. Expressed in male germ cells (at protein level). Expressed at lower levels in adult thyroid, submaxillary gland, ovary and epididymis.

Its subcellular location is the cytoplasm. It is found in the nucleus. Functionally, seems to be involved in regulation of transcriptional activity of MYC. In vitro, inhibits DNA-binding activity of Mad-MAX heterodimers. Can recruit Mad transcriptional repressors (MXD1, MXD3, MXD4 and MXI1) to the cytoplasm. May be involved in spermiogenesis. The polypeptide is RING finger protein 17 (Rnf17) (Mus musculus (Mouse)).